A 375-amino-acid polypeptide reads, in one-letter code: Histidine biosynthesis bifunctional protein HisB (375 aa).

The histidinol-phosphatase stretch occupies residues Met1–Pro168. The active-site Nucleophile is the Asp8. The Mg(2+) site is built by Asp8, Asp10, and Asp128. Asp10 (proton donor) is an active-site residue. Residues Arg169–Leu375 form an imidazoleglycerol-phosphate dehydratase region.

This sequence in the N-terminal section; belongs to the histidinol-phosphatase family. The protein in the C-terminal section; belongs to the imidazoleglycerol-phosphate dehydratase family. Mg(2+) serves as cofactor.

The protein localises to the cytoplasm. The catalysed reaction is D-erythro-1-(imidazol-4-yl)glycerol 3-phosphate = 3-(imidazol-4-yl)-2-oxopropyl phosphate + H2O. The enzyme catalyses L-histidinol phosphate + H2O = L-histidinol + phosphate. It participates in amino-acid biosynthesis; L-histidine biosynthesis; L-histidine from 5-phospho-alpha-D-ribose 1-diphosphate: step 6/9. It functions in the pathway amino-acid biosynthesis; L-histidine biosynthesis; L-histidine from 5-phospho-alpha-D-ribose 1-diphosphate: step 8/9. The protein is Histidine biosynthesis bifunctional protein HisB of Xanthomonas axonopodis pv. citri (strain 306).